A 410-amino-acid chain; its full sequence is Peptidase T (410 aa).

Residue H79 participates in Zn(2+) binding. Residue D81 is part of the active site. D142 contacts Zn(2+). The Proton acceptor role is filled by E176. Residues E177, D199, and H381 each coordinate Zn(2+).

This sequence belongs to the peptidase M20B family. The cofactor is Zn(2+).

The protein resides in the cytoplasm. It carries out the reaction Release of the N-terminal residue from a tripeptide.. Cleaves the N-terminal amino acid of tripeptides. In Bacillus pumilus (strain SAFR-032), this protein is Peptidase T.